We begin with the raw amino-acid sequence, 363 residues long: Putative F-box protein At4g22170 (363 aa).

An F-box domain is found at 7-58 (PNSWSDLPHDLLNLVFERLSFANFNRARSVCSSWYSASRQSVPKNQIHWLIL).

This chain is Putative F-box protein At4g22170, found in Arabidopsis thaliana (Mouse-ear cress).